We begin with the raw amino-acid sequence, 614 residues long: Cathepsin F (614 aa).

The first 20 residues, 1–20, serve as a signal peptide directing secretion; the sequence is MRLFAAATVALVLLLGQAAG. The propeptide at 21–393 is activation peptide; the sequence is EELAEERAGQ…AAVVPAYHGE (373 aa). A disordered region spans residues 25 to 50; it reads EERAGQAQGDAESTESSETTTDQAVS. A compositionally biased stretch (low complexity) spans 29–45; the sequence is GQAQGDAESTESSETTT. Residue asparagine 151 is glycosylated (N-linked (GlcNAc...) asparagine). 2 cysteine pairs are disulfide-bonded: cysteine 415–cysteine 456 and cysteine 449–cysteine 489. Residue cysteine 418 is part of the active site. N-linked (GlcNAc...) asparagine glycosylation is found at asparagine 492 and asparagine 510. Cysteine 548 and cysteine 602 are disulfide-bonded. Residues histidine 555 and asparagine 581 contribute to the active site.

Belongs to the peptidase C1 family.

It carries out the reaction The recombinant enzyme cleaves synthetic substrates with Phe and Leu (better than Val) in P2, with high specificity constant (kcat/Km) comparable to that of cathepsin L.. May have a role in autophagic cell death. This is Cathepsin F from Drosophila melanogaster (Fruit fly).